An 89-amino-acid chain; its full sequence is Cell division protein FtsB (89 aa).

At methionine 1–proline 3 the chain is on the cytoplasmic side. A helical membrane pass occupies residues isoleucine 4–phenylalanine 21. At alanine 22 to lysine 89 the chain is on the periplasmic side. Positions valine 29 to histidine 62 form a coiled coil.

It belongs to the FtsB family. Part of a complex composed of FtsB, FtsL and FtsQ.

The protein resides in the cell inner membrane. Essential cell division protein. May link together the upstream cell division proteins, which are predominantly cytoplasmic, with the downstream cell division proteins, which are predominantly periplasmic. This Coxiella burnetii (strain RSA 493 / Nine Mile phase I) protein is Cell division protein FtsB.